The primary structure comprises 464 residues: Glutamate--tRNA ligase 2 (464 aa).

The short motif at 11–21 (PSPTGFLHIGS) is the 'HIGH' region element. The 'KMSKS' region signature appears at 240-244 (KLSKR). Lys-243 is a binding site for ATP.

The protein belongs to the class-I aminoacyl-tRNA synthetase family. Glutamate--tRNA ligase type 1 subfamily. As to quaternary structure, monomer.

It is found in the cytoplasm. It catalyses the reaction tRNA(Glu) + L-glutamate + ATP = L-glutamyl-tRNA(Glu) + AMP + diphosphate. In terms of biological role, catalyzes the attachment of glutamate to tRNA(Glu) in a two-step reaction: glutamate is first activated by ATP to form Glu-AMP and then transferred to the acceptor end of tRNA(Glu). The chain is Glutamate--tRNA ligase 2 from Rickettsia bellii (strain OSU 85-389).